Consider the following 364-residue polypeptide: Homeobox protein Nkx-2.3 (364 aa).

Positions 132-153 (GDCKAAEESERPKPRSRRKPRV) are disordered. Basic and acidic residues predominate over residues 135 to 144 (KAAEESERPK). The segment at residues 148 to 207 (RRKPRVLFSQAQVFELERRFKQQRYLSAPEREHLASSLKLTSTQVKIWFQNRRYKCKRQR) is a DNA-binding region (homeobox).

It belongs to the NK-2 homeobox family.

Its subcellular location is the nucleus. Its function is as follows. Transcription factor. The polypeptide is Homeobox protein Nkx-2.3 (NKX2-3) (Homo sapiens (Human)).